The primary structure comprises 268 residues: Thiazole synthase (268 aa).

Catalysis depends on Lys-111, which acts as the Schiff-base intermediate with DXP. 1-deoxy-D-xylulose 5-phosphate contacts are provided by residues Gly-172, 198–199 (AG), and 220–221 (NT).

The protein belongs to the ThiG family. As to quaternary structure, homotetramer. Forms heterodimers with either ThiH or ThiS.

The protein localises to the cytoplasm. It catalyses the reaction [ThiS sulfur-carrier protein]-C-terminal-Gly-aminoethanethioate + 2-iminoacetate + 1-deoxy-D-xylulose 5-phosphate = [ThiS sulfur-carrier protein]-C-terminal Gly-Gly + 2-[(2R,5Z)-2-carboxy-4-methylthiazol-5(2H)-ylidene]ethyl phosphate + 2 H2O + H(+). It functions in the pathway cofactor biosynthesis; thiamine diphosphate biosynthesis. Functionally, catalyzes the rearrangement of 1-deoxy-D-xylulose 5-phosphate (DXP) to produce the thiazole phosphate moiety of thiamine. Sulfur is provided by the thiocarboxylate moiety of the carrier protein ThiS. In vitro, sulfur can be provided by H(2)S. This is Thiazole synthase from Caulobacter sp. (strain K31).